The primary structure comprises 124 residues: Histone H2A (124 aa).

Over residues 1–18 the composition is skewed to basic residues; it reads MSGRGKGGKAKGKSKTRS. The tract at residues 1-23 is disordered; sequence MSGRGKGGKAKGKSKTRSSRAGL. Serine 2 is subject to N-acetylserine. Serine 2 is subject to Phosphoserine. At glutamine 104 the chain carries N5-methylglutamine.

The protein belongs to the histone H2A family. The nucleosome is a histone octamer containing two molecules each of H2A, H2B, H3 and H4 assembled in one H3-H4 heterotetramer and two H2A-H2B heterodimers. The octamer wraps approximately 147 bp of DNA. In terms of processing, phosphorylation of Ser-2 directly represses transcription.

The protein resides in the nucleus. The protein localises to the chromosome. In terms of biological role, core component of nucleosome. Nucleosomes wrap and compact DNA into chromatin, limiting DNA accessibility to the cellular machineries which require DNA as a template. Histones thereby play a central role in transcription regulation, DNA repair, DNA replication and chromosomal stability. DNA accessibility is regulated via a complex set of post-translational modifications of histones, also called histone code, and nucleosome remodeling. In Platynereis dumerilii (Dumeril's clam worm), this protein is Histone H2A.